Reading from the N-terminus, the 1249-residue chain is AMB antimetabolite synthetase AmbB (1249 aa).

Residues 245–633 form an adenylation region; sequence FEAQARRTPQ…LGRLDDQVKF (389 aa). The segment at 716-735 is disordered; it reads IDRKALPRPQATGAEPQALP. Residues 734–809 form the Carrier domain; the sequence is LPSDPLEQAL…ALLELLRQAA (76 aa). Residue S768 is modified to O-(pantetheine 4'-phosphoryl)serine. The condensation stretch occupies residues 823–1150; the sequence is GLSLAERRLW…CVTQALRQRG (328 aa).

The protein belongs to the NRP synthetase family. The cofactor is pantetheine 4'-phosphate.

The enzyme catalyses holo-[peptidyl-carrier protein] + L-alanine + ATP = L-alanyl-[peptidyl-carrier protein] + AMP + diphosphate. Functionally, involved in the biosynthesis of the antimetabolite L-2-amino-4-methoxy-trans-3-butenoic acid (AMB), a non-proteinogenic amino acid which is toxic for prokaryotes and eukaryotes. Adenylates L-alanine and loads it onto its peptidyl carrier domain via a thioester linkage to the phosphopanthetheine moiety. In addition, loads activated L-Ala in trans onto the second carrier domain of AmbE. Can also activate L-Ser, Gly and D-Ala, albeit to a lower extent. The condensation domain of AmbB probably condenses the activated L-Ala and the L-Glu loaded on AmbE to form a L-Glu-L-Ala dipeptide at the first carrier domain of AmbE. In Pseudomonas aeruginosa (strain ATCC 15692 / DSM 22644 / CIP 104116 / JCM 14847 / LMG 12228 / 1C / PRS 101 / PAO1), this protein is AMB antimetabolite synthetase AmbB.